A 469-amino-acid polypeptide reads, in one-letter code: Ufm1-specific protease 2 (469 aa).

Met-1 is modified (N-acetylmethionine). Residues Cys-302, Asp-426, and His-428 contribute to the active site.

The protein belongs to the peptidase C78 family.

It localises to the endoplasmic reticulum. Its subcellular location is the cytoplasm. The protein localises to the nucleus. Its function is as follows. Thiol-dependent isopeptidase that specifically cleaves UFM1, a ubiquitin-like modifier protein, from conjugated proteins, such as CD274/PD-L1, CYB5R3, DDRGK1, MRE11, RPL26/uL24, TRIP4 and RPL26/uL24. While it is also able to mediate the processing of UFM1 precursors, a prerequisite for conjugation reactions, UFSP2 mainly acts as a protein deUFMylase that mediates deconjugation of UFM1 from target proteins. Mediates deUFMylation of RPL26/uL24, a critical step to release the UFM1 ribosome E3 ligase (UREL) complex during the recycling of 60S ribosome subunits from the endoplasmic reticulum. Catalyzes deUFMylation of TRIP4, regulating intracellular nuclear receptors transactivation and thereby regulate cell proliferation and differentiation. The polypeptide is Ufm1-specific protease 2 (Pongo abelii (Sumatran orangutan)).